The chain runs to 579 residues: DELLA protein GAIP (579 aa).

Residues 1–25 are disordered; sequence MKREHHYLHPRPEPPSVATGSNRES. The DELLA motif signature appears at 46-50; that stretch reads DELLA. The region spanning 202–570 is the GRAS domain; it reads VDSQENGIQL…RPLIATSAWK (369 aa). The leucine repeat I (LRI) stretch occupies residues 209–263; the sequence is IQLVHALMVCAEAVQQNNLNLAEALVKRIDYLAVSQAGAMRKVATFFAEALARRI. Residues 281–346 are VHIID; it reads QMHFYESCPY…SGPPTFRLTG (66 aa). A VHIID motif is present at residues 312–316; that stretch reads VHVID. The leucine repeat II (LRII) stretch occupies residues 360 to 392; that stretch reads DVGWKLVKFAETLHVEFEYRGFVANSLADLDAS. Residues 404–491 are PFYRE; the sequence is VVVNSVFELH…EMYLGKQICN (88 aa). Positions 412-416 match the LXXLL motif motif; the sequence is LHQLL. An SAW region spans residues 494–570; it reads ACEGADRVER…RPLIATSAWK (77 aa).

It belongs to the GRAS family. DELLA subfamily. Post-translationally, phosphorylated. Ubiquitinated. Upon GA application it is ubiquitinated, leading to its subsequent degradation.

The protein localises to the nucleus. In terms of biological role, probable transcriptional regulator that acts as a repressor of the gibberellin (GA) signaling pathway. Probably acts by participating in large multiprotein complexes that represses transcription of GA-inducible genes. Upon GA application, it is degraded by the proteasome, allowing the GA signaling pathway. This is DELLA protein GAIP (GAIP) from Cucurbita maxima (Pumpkin).